We begin with the raw amino-acid sequence, 732 residues long: Elongation factor 2 (732 aa).

In terms of domain architecture, tr-type G spans E19–I260. GTP is bound by residues A28 to T35, D94 to H98, and N148 to D151. Diphthamide is present on H597.

It belongs to the TRAFAC class translation factor GTPase superfamily. Classic translation factor GTPase family. EF-G/EF-2 subfamily.

The protein resides in the cytoplasm. Its function is as follows. Catalyzes the GTP-dependent ribosomal translocation step during translation elongation. During this step, the ribosome changes from the pre-translocational (PRE) to the post-translocational (POST) state as the newly formed A-site-bound peptidyl-tRNA and P-site-bound deacylated tRNA move to the P and E sites, respectively. Catalyzes the coordinated movement of the two tRNA molecules, the mRNA and conformational changes in the ribosome. This Pyrococcus abyssi (strain GE5 / Orsay) protein is Elongation factor 2 (fusA).